We begin with the raw amino-acid sequence, 252 residues long: Probable transcriptional regulatory protein Caur_1043 (252 aa).

Over residues 1 to 14 (MSGHSKWHTIRRTK) the composition is skewed to basic residues. The disordered stretch occupies residues 1 to 22 (MSGHSKWHTIRRTKGVNDQRRG).

Belongs to the TACO1 family.

It localises to the cytoplasm. The protein is Probable transcriptional regulatory protein Caur_1043 of Chloroflexus aurantiacus (strain ATCC 29366 / DSM 635 / J-10-fl).